The primary structure comprises 348 residues: tRNA N6-adenosine threonylcarbamoyltransferase (348 aa).

Positions 119 and 123 each coordinate Fe cation. Substrate contacts are provided by residues leucine 141–glycine 145, aspartate 174, glycine 187, aspartate 191, and asparagine 280. Residue aspartate 310 participates in Fe cation binding.

It belongs to the KAE1 / TsaD family. Requires Fe(2+) as cofactor.

The protein localises to the cytoplasm. The enzyme catalyses L-threonylcarbamoyladenylate + adenosine(37) in tRNA = N(6)-L-threonylcarbamoyladenosine(37) in tRNA + AMP + H(+). Required for the formation of a threonylcarbamoyl group on adenosine at position 37 (t(6)A37) in tRNAs that read codons beginning with adenine. Is involved in the transfer of the threonylcarbamoyl moiety of threonylcarbamoyl-AMP (TC-AMP) to the N6 group of A37, together with TsaE and TsaB. TsaD likely plays a direct catalytic role in this reaction. This is tRNA N6-adenosine threonylcarbamoyltransferase from Enterococcus faecalis (strain ATCC 700802 / V583).